Consider the following 118-residue polypeptide: Ribosome-binding factor A (118 aa).

The protein belongs to the RbfA family. In terms of assembly, monomer. Binds 30S ribosomal subunits, but not 50S ribosomal subunits or 70S ribosomes.

The protein localises to the cytoplasm. Its function is as follows. One of several proteins that assist in the late maturation steps of the functional core of the 30S ribosomal subunit. Associates with free 30S ribosomal subunits (but not with 30S subunits that are part of 70S ribosomes or polysomes). Required for efficient processing of 16S rRNA. May interact with the 5'-terminal helix region of 16S rRNA. This Streptococcus pyogenes serotype M1 protein is Ribosome-binding factor A.